The chain runs to 121 residues: Small ribosomal subunit protein uS13 (121 aa).

The segment at 91–121 is disordered; the sequence is HRMSLPVRGQRTRTNARTRRGSRKTVAGRKK. Basic residues predominate over residues 100–121; it reads QRTRTNARTRRGSRKTVAGRKK.

This sequence belongs to the universal ribosomal protein uS13 family. As to quaternary structure, part of the 30S ribosomal subunit. Forms a loose heterodimer with protein S19. Forms two bridges to the 50S subunit in the 70S ribosome.

Its function is as follows. Located at the top of the head of the 30S subunit, it contacts several helices of the 16S rRNA. In the 70S ribosome it contacts the 23S rRNA (bridge B1a) and protein L5 of the 50S subunit (bridge B1b), connecting the 2 subunits; these bridges are implicated in subunit movement. Contacts the tRNAs in the A and P-sites. The protein is Small ribosomal subunit protein uS13 of Prochlorococcus marinus (strain MIT 9301).